Consider the following 500-residue polypeptide: Type-2 serine--tRNA ligase (500 aa).

Ala-305 contributes to the L-serine binding site. Residue Cys-307 participates in Zn(2+) binding. Arg-337 is a binding site for L-serine. ATP is bound by residues 337–339 and 348–349; these read RYE and RV. L-serine-binding positions include 354-356 and Gln-401; that span reads RIE. Glu-356 lines the Zn(2+) pocket. Residue Glu-430 coordinates ATP. L-serine is bound at residue Asn-433. Zn(2+) is bound at residue Cys-459. Position 466 (Arg-466) interacts with ATP.

The protein belongs to the class-II aminoacyl-tRNA synthetase family. Type-2 seryl-tRNA synthetase subfamily. In terms of assembly, homodimer. The cofactor is Zn(2+).

The protein localises to the cytoplasm. The catalysed reaction is tRNA(Ser) + L-serine + ATP = L-seryl-tRNA(Ser) + AMP + diphosphate + H(+). It carries out the reaction tRNA(Sec) + L-serine + ATP = L-seryl-tRNA(Sec) + AMP + diphosphate + H(+). The protein operates within aminoacyl-tRNA biosynthesis; selenocysteinyl-tRNA(Sec) biosynthesis; L-seryl-tRNA(Sec) from L-serine and tRNA(Sec): step 1/1. Catalyzes the attachment of serine to tRNA(Ser). Is also able to aminoacylate tRNA(Sec) with serine, to form the misacylated tRNA L-seryl-tRNA(Sec), which will be further converted into selenocysteinyl-tRNA(Sec). This Methanothrix thermoacetophila (strain DSM 6194 / JCM 14653 / NBRC 101360 / PT) (Methanosaeta thermophila) protein is Type-2 serine--tRNA ligase.